The chain runs to 396 residues: Elongation factor Tu (396 aa).

Residues Lys10–Glu205 form the tr-type G domain. A G1 region spans residues Gly19 to Thr26. A GTP-binding site is contributed by Gly19–Thr26. Position 26 (Thr26) interacts with Mg(2+). The segment at Gly62 to Asn66 is G2. The segment at Asp83 to Gly86 is G3. Residues Asp83–His87 and Asn138–Asp141 contribute to the GTP site. Residues Asn138–Asp141 form a G4 region. The tract at residues Ser175–Leu177 is G5.

This sequence belongs to the TRAFAC class translation factor GTPase superfamily. Classic translation factor GTPase family. EF-Tu/EF-1A subfamily. In terms of assembly, monomer.

It is found in the cytoplasm. It catalyses the reaction GTP + H2O = GDP + phosphate + H(+). In terms of biological role, GTP hydrolase that promotes the GTP-dependent binding of aminoacyl-tRNA to the A-site of ribosomes during protein biosynthesis. The protein is Elongation factor Tu of Corynebacterium aurimucosum (strain ATCC 700975 / DSM 44827 / CIP 107346 / CN-1) (Corynebacterium nigricans).